A 530-amino-acid chain; its full sequence is Alkali-sensitive linkage protein 1 (530 aa).

Residues 1 to 18 form the signal peptide; it reads MRTTFATVALAFLSTVGA. A glycan (N-linked (GlcNAc...) asparagine) is linked at asparagine 55. The tract at residues 69-90 is disordered; sequence SVTESSDDGASTALPTTSTESV. N-linked (GlcNAc...) asparagine glycosylation is found at asparagine 120 and asparagine 128.

The protein localises to the endoplasmic reticulum. Its subcellular location is the golgi apparatus. It localises to the secreted. The protein resides in the cell wall. This chain is Alkali-sensitive linkage protein 1 (asl1), found in Schizosaccharomyces pombe (strain 972 / ATCC 24843) (Fission yeast).